Reading from the N-terminus, the 278-residue chain is Casein kinase II subunit beta (278 aa).

2 disordered regions span residues 1–22 (MSQE…DSGA) and 78–111 (DEEE…RNKS). Ser2 carries the post-translational modification N-acetylserine. Ser2 bears the Phosphoserine mark. Positions 78-94 (DEEEDEDDVVEEDEVDQ) are enriched in acidic residues.

This sequence belongs to the casein kinase 2 subunit beta family. In terms of assembly, tetramer composed of an alpha subunit, an alpha' subunit, one beta subunit and one beta' subunit. Interacts with FACT subunits POB3 and SPT16. interacts with YTA7. Post-translationally, phosphorylated by alpha subunit.

Regulatory subunit of casein kinase II/CK2. As part of the kinase complex regulates the basal catalytic activity of the alpha subunit a constitutively active serine/threonine-protein kinase that phosphorylates a large number of substrates containing acidic residues C-terminal to the phosphorylated serine or threonine. This Saccharomyces cerevisiae (strain ATCC 204508 / S288c) (Baker's yeast) protein is Casein kinase II subunit beta (CKB1).